The sequence spans 235 residues: Glutathione S-transferase 1 (235 aa).

The 78-residue stretch at Glu36–Gly113 folds into the GST N-terminal domain. Residues Tyr42, Trp73, Lys77, Val85, and Glu97–Ser98 contribute to the glutathione site. The 121-residue stretch at Asn115–Phe235 folds into the GST C-terminal domain.

It belongs to the GST superfamily. In terms of assembly, homodimer.

It carries out the reaction RX + glutathione = an S-substituted glutathione + a halide anion + H(+). The polypeptide is Glutathione S-transferase 1 (GST1) (Onchocerca volvulus).